The sequence spans 392 residues: MSNFKNFTLNSFEDYYGKPSETPKMEEEKLEVTNVNASSSKKVHKSKKSTSKYDQKNVFRNSMTGIAQILPTKPVKIIEQNIDFANPKSFDLLQSTHTICFNKRINTTNTKLNVETHTSSDIDNDILHVGAPTDLGGNSNDEAETRQLRKFRWSNNKEKSLCEKLTVIYWALLLHTTKRASKRRPILCHQMIAEFFNRVYKEKSRVPITSRYIRDNLVAWVTQGKELHEKGWVGDAKTGDLQEQFNIATVKLYESAEDGRLSIGKDKPFREENTGSDSLVRAEEDSTAVTNENGHISSEKNLKKDRRESIRNQILTLDLNDEDFFQNVMKVLSAIDEPELRQYVIVISELVSMEMDDGKTVREKLRDVELNINRLQVDIKEIKEMLVTLINK.

The residue at position 11 (S11) is a Phosphoserine. The segment at 18–52 (KPSETPKMEEEKLEVTNVNASSSKKVHKSKKSTSK) is disordered. Basic and acidic residues predominate over residues 21 to 31 (ETPKMEEEKLE). The segment covering 41–50 (KKVHKSKKST) has biased composition (basic residues). A Phosphoserine modification is found at S139. The disordered stretch occupies residues 284 to 303 (EDSTAVTNENGHISSEKNLK). A compositionally biased stretch (polar residues) spans 287-296 (TAVTNENGHI).

The protein resides in the cytoplasm. It is found in the nucleus. This chain is Protein SRL2 (SRL2), found in Saccharomyces cerevisiae (strain ATCC 204508 / S288c) (Baker's yeast).